A 793-amino-acid polypeptide reads, in one-letter code: Protocadherin beta-7 (793 aa).

An N-terminal signal peptide occupies residues 1–26 (MEARVERAVQKRQVLFLCVFLGMSWA). Residues 27-688 (GAEPLRYFVA…DQANSLTVYL (662 aa)) are Extracellular-facing. Cadherin domains are found at residues 35-133 (VAEE…APVF), 138-242 (ISLK…APDF), 247-347 (YKVQ…RPEL), 352-451 (LTSP…APAF), and 456-561 (YTLF…SPFV). N169 carries N-linked (GlcNAc...) asparagine glycosylation. 2 N-linked (GlcNAc...) asparagine glycosylation sites follow: N418 and N436. N567 carries N-linked (GlcNAc...) asparagine glycosylation. Positions 568-671 (SSAPCTEPLP…LVDGFSQPYL (104 aa)) constitute a Cadherin 6 domain. Residues 689 to 709 (VVALASVSSLFLLSVLLFVAV) form a helical membrane-spanning segment. The Cytoplasmic portion of the chain corresponds to 710–793 (RLCRRSRAAP…NRPFQNNLGF (84 aa)).

The protein resides in the cell membrane. In terms of biological role, potential calcium-dependent cell-adhesion protein. May be involved in the establishment and maintenance of specific neuronal connections in the brain. This is Protocadherin beta-7 (PCDHB7) from Homo sapiens (Human).